An 85-amino-acid chain; its full sequence is MSDEINETCKPQACAIQNCLMKNGYNESKCSYYIDELYKCCKKFYESNGSSASSVCCPKFNLLQLKLKQRELGQIDANLIDTKHG.

The CHCH domain occupies 6–48; that stretch reads NETCKPQACAIQNCLMKNGYNESKCSYYIDELYKCCKKFYESN. 2 consecutive short sequence motifs (cx9C motif) follow at residues 9 to 19 and 30 to 40; these read CKPQACAIQNC and CSYYIDELYKC. 2 cysteine pairs are disulfide-bonded: Cys-9-Cys-40 and Cys-19-Cys-30.

This sequence belongs to the CMC4 family.

The protein resides in the mitochondrion intermembrane space. The polypeptide is Cx9C motif-containing protein 4, mitochondrial (CMC4) (Candida tropicalis (strain ATCC MYA-3404 / T1) (Yeast)).